We begin with the raw amino-acid sequence, 426 residues long: Methionine aminopeptidase 2 (426 aa).

Positions 1–72 (MTSATTTEAT…QEQTNPPTVG (72 aa)) are disordered. A compositionally biased stretch (basic and acidic residues) spans 10–34 (TAKDLQEKLSLKENDVVEDDGKVEE). Positions 47–60 (KKKKKKKKSSKKKK) are enriched in basic residues. His179 is a substrate binding site. A divalent metal cation is bound by residues Asp199, Asp210, and His279. Residue His287 coordinates substrate. Glu312 and Glu407 together coordinate a divalent metal cation.

Belongs to the peptidase M24A family. Methionine aminopeptidase eukaryotic type 2 subfamily. The cofactor is Co(2+). Requires Zn(2+) as cofactor. It depends on Mn(2+) as a cofactor. Fe(2+) serves as cofactor.

It localises to the cytoplasm. It carries out the reaction Release of N-terminal amino acids, preferentially methionine, from peptides and arylamides.. Functionally, cotranslationally removes the N-terminal methionine from nascent proteins. The N-terminal methionine is often cleaved when the second residue in the primary sequence is small and uncharged (Met-Ala-, Cys, Gly, Pro, Ser, Thr, or Val). In Schizosaccharomyces pombe (strain 972 / ATCC 24843) (Fission yeast), this protein is Methionine aminopeptidase 2 (fma2).